The sequence spans 389 residues: MEKAIRNFLSQESAGGILLLVAVALAMLMANSPLAGLYQGFLGTEVQVRVGALDLHKPLLLWINDGLMALFFLLIGLEVKRELLEGALSSVAQASLPTFAAIGGMLVPAGIYLLFNYGDPVTQAGWAIPAATDIAFALGIMALLGSRVPVALKVFLLALAIIDDLGVIVIIALFYSTDLSTISLIIASIAIVGLVALNRKGVTALAPYGVLGLVLWVAVLKSGVHATLAGVIIAFCIPLRAKDGSSPSEHLEHSLHPWSTFLILPVFAFANAGVALGNMSLNTLISPVPVGIALGLMLGKPIGVMLFSYAAVKLRLAQLPNGIGWKQIAPVAAMCGIGFTMSMFIASLAFEQADPMYGDLARLGTLIGSILAALIGYFWLSKVLPKQGV.

The next 11 membrane-spanning stretches (helical) occupy residues 17 to 37 (ILLL…LAGL), 59 to 79 (LLLW…GLEV), 95 to 115 (SLPT…YLLF), 124 to 144 (AGWA…MALL), 154 to 174 (VFLL…IALF), 177 to 197 (TDLS…LVAL), 213 to 233 (LVLW…GVII), 261 to 281 (FLIL…NMSL), 287 to 307 (PVPV…VMLF), 328 to 348 (IAPV…IASL), and 363 to 383 (LGTL…LSKV).

This sequence belongs to the NhaA Na(+)/H(+) (TC 2.A.33) antiporter family.

Its subcellular location is the cell inner membrane. The catalysed reaction is Na(+)(in) + 2 H(+)(out) = Na(+)(out) + 2 H(+)(in). Functionally, na(+)/H(+) antiporter that extrudes sodium in exchange for external protons. The sequence is that of Na(+)/H(+) antiporter NhaA from Shewanella sp. (strain MR-4).